Consider the following 245-residue polypeptide: tRNA1(Val) (adenine(37)-N6)-methyltransferase (245 aa).

Belongs to the methyltransferase superfamily. tRNA (adenine-N(6)-)-methyltransferase family.

The protein resides in the cytoplasm. It catalyses the reaction adenosine(37) in tRNA1(Val) + S-adenosyl-L-methionine = N(6)-methyladenosine(37) in tRNA1(Val) + S-adenosyl-L-homocysteine + H(+). Its function is as follows. Specifically methylates the adenine in position 37 of tRNA(1)(Val) (anticodon cmo5UAC). The protein is tRNA1(Val) (adenine(37)-N6)-methyltransferase of Escherichia coli O157:H7 (strain EC4115 / EHEC).